We begin with the raw amino-acid sequence, 467 residues long: Vacuolar protein sorting-associated protein 62 (467 aa).

The chain crosses the membrane as a helical span at residues 17–37; the sequence is FLVTFIIYSIIPCRAVLVPWL. Residues Asn74 and Asn145 are each glycosylated (N-linked (GlcNAc...) asparagine).

Belongs to the VPS62 family.

It is found in the membrane. Its function is as follows. Involved in vacuolar protein sorting. In Saccharomyces cerevisiae (strain ATCC 204508 / S288c) (Baker's yeast), this protein is Vacuolar protein sorting-associated protein 62 (VPS62).